The chain runs to 591 residues: MAQGKVARVNGPLVVAEGMKDAQMFEVVEVGEPRLVGEITRIEGDRAYIQVYEDTSGIRPGEPVFGSGAPLSVELGPGLLGQLFDGLLRPLGEIKEITKSPFIKRGIKLPTLNREKEWHFVPKMKKGDKVEPGDILGVVQETGLVEHRILVPPYVHGKLKEVVAEGDYKVEDNVAIVDMNGDEVPVKMMQKWPVRVPRPFKEKLDPSQPLLTGVRILDTIFPIAKGGTAAIPGPFGSGKTVTLQSLSKWSEAKIVIFVGCGERGNEMTDELRSFPKLKDPWTGRPLLERTVMVANTSNMPVAAREASIYVGVTLAEYFRDQGYDVLTVADSTSRWAEALRDLGGRMEEMPAEEGFPSYLSSRIAEYYERAGRVRTLGNPERYGSVTLASAVSPPGGDFTEPVTSTTLRFVRVFWPLDVSLAQARHYPAINWLQGFSSYVDLVSDWWIKNVDPDWRIMRDFMVRTLLREDELKQIVRLVGPESLAEKDKLTLEVARLIKEAFLKQNAYDDIDAFSSPQKQARIMKLIYHYNQYATNAVERGIPVKKIVDKITVVPDIIRSKATIKNNELQKYDELENKLKAQFDELLKEAGA.

Position 233-240 (233-240 (GPFGSGKT)) interacts with ATP.

The protein belongs to the ATPase alpha/beta chains family. In terms of assembly, has multiple subunits with at least A(3), B(3), C, D, E, F, H, I and proteolipid K(x).

It localises to the cell membrane. The catalysed reaction is ATP + H2O + 4 H(+)(in) = ADP + phosphate + 5 H(+)(out). Functionally, component of the A-type ATP synthase that produces ATP from ADP in the presence of a proton gradient across the membrane. The A chain is the catalytic subunit. This Metallosphaera sedula (strain ATCC 51363 / DSM 5348 / JCM 9185 / NBRC 15509 / TH2) protein is A-type ATP synthase subunit A.